A 1610-amino-acid polypeptide reads, in one-letter code: Voltage-dependent L-type calcium channel subunit alpha-1D (1610 aa).

The tract at residues 1–99 is disordered; it reads MMMMMMKKMQ…SKKQGNSSNS (99 aa). Residues 1-125 are Cytoplasmic-facing; sequence MMMMMMKKMQ…RACISIVEWK (125 aa). Positions 37 to 51 are enriched in polar residues; sequence GPTSQPNSSKQTVLS. Positions 53-66 are enriched in low complexity; that stretch reads QAAIDAARQAKAAQ. Basic residues predominate over residues 81-92; it reads QRKRQQYAKSKK. The I repeat unit spans residues 112 to 408; that stretch reads NPIRRACISI…LVLGVLSGEF (297 aa). A helical membrane pass occupies residues 126–144; that stretch reads PFDIFILLAIFANCVALAI. Over 145–162 the chain is Extracellular; sequence YIPFPEDDSNSTNHNLEK. Asn-154 is a glycosylation site (N-linked (GlcNAc...) asparagine). Residues 163–182 traverse the membrane as a helical segment; that stretch reads VEYAFLIIFTVETFLKIIAY. Topologically, residues 183-194 are cytoplasmic; it reads GLLLHPNAYVRN. A helical transmembrane segment spans residues 195–213; the sequence is GWNLLDFVIVIVGLFSVIL. Over 214–234 the chain is Extracellular; that stretch reads EQLTKETEGGNHSSGKSGGFD. Asn-224 carries an N-linked (GlcNAc...) asparagine glycan. Residues 235–253 traverse the membrane as a helical segment; sequence VKALRAFRVLRPLRLVSGV. The Cytoplasmic portion of the chain corresponds to 254–272; that stretch reads PSLQVVLNSIIKAMVPLLH. Residues 273 to 292 traverse the membrane as a helical segment; that stretch reads IALLVLFVIIIYAIIGLELF. At 293–380 the chain is on the extracellular side; sequence IGKMHKTCFF…WMNDAMGFEL (88 aa). Asn-328 is a glycosylation site (N-linked (GlcNAc...) asparagine). Glu-363 provides a ligand contact to Ca(2+). The chain crosses the membrane as a helical span at residues 381-405; that stretch reads PWVYFVSLVIFGSFFVLNLVLGVLS. The Cytoplasmic portion of the chain corresponds to 406–522; it reads GEFSKEREKA…RRCRAAVKSV (117 aa). A binding to the beta subunit region spans residues 428 to 445; that stretch reads EQLEEDLKGYLDWITQAE. The interval 448–487 is disordered; that stretch reads DPENEEEGGEEGKRNTSMPTSETESVNTENVSGEGETQGS. Residues 462–487 show a composition bias toward polar residues; that stretch reads NTSMPTSETESVNTENVSGEGETQGS. Residues 508–754 form an II repeat; sequence NRFNRRRCRA…VFLAIAVDNL (247 aa). The chain crosses the membrane as a helical span at residues 523–542; it reads TFYWLVIVLVFLNTLTISSE. The Extracellular portion of the chain corresponds to 543 to 557; the sequence is HYNQPDWLTQIQDIA. The chain crosses the membrane as a helical span at residues 558-576; that stretch reads NKVLLALFTCEMLVKMYSL. Topologically, residues 577-584 are cytoplasmic; sequence GLQAYFVS. The chain crosses the membrane as a helical span at residues 585–603; it reads LFNRFDCFVVCGGITETIL. Residues 604–613 are Extracellular-facing; sequence VELELMSPLG. A helical membrane pass occupies residues 614–632; the sequence is VSVFRCVRLLRIFKVTRHW. Residues 633–651 are Cytoplasmic-facing; the sequence is TSLSNLVASLLNSMKSIAS. The chain crosses the membrane as a helical span at residues 652 to 672; sequence LLLLLFLFIIIFSLLGMQLFG. Residues 673-726 lie on the Extracellular side of the membrane; the sequence is GKFNFDETQTKRSTFDNFPQALLTVFQILTGEDWNAVMYDGIMAYGGPSSSGMI. A Ca(2+)-binding site is contributed by Glu-704. A helical membrane pass occupies residues 727–751; the sequence is VCIYFIILFICGNYILLNVFLAIAV. Topologically, residues 752 to 884 are cytoplasmic; the sequence is DNLADAESLN…VGCHKLINHH (133 aa). Positions 765-789 are enriched in basic and acidic residues; that stretch reads KEEAEEKERKKIARKESLENKKNNK. Residues 765–846 form a disordered region; the sequence is KEEAEEKERK…VPAGPRPRRI (82 aa). The span at 790–801 shows a compositional bias: polar residues; that stretch reads PEVNQIANSDNK. Residues 824–836 show a composition bias toward acidic residues; the sequence is VGEEEEEEEEEPE. The stretch at 871–1153 is one III repeat; it reads NPIRVGCHKL…IFVGFVIVTF (283 aa). A helical transmembrane segment spans residues 885–903; sequence IFTNLILVFIMLSSAALAA. At 904–919 the chain is on the extracellular side; it reads EDPIRSHSFRNTILGY. A helical membrane pass occupies residues 920-939; the sequence is FDYAFTAIFTVEILLKMTTF. Residues 940 to 951 are Cytoplasmic-facing; that stretch reads GAFLHKGAFCRN. Residues 952–970 traverse the membrane as a helical segment; sequence YFNLLDMLVVGVSLVSFGI. The Extracellular portion of the chain corresponds to 971–976; sequence QSSAIS. Residues 977-996 traverse the membrane as a helical segment; that stretch reads VVKILRVLRVLRPLRAINRA. At 997 to 1015 the chain is on the cytoplasmic side; sequence KGLKHVVQCVFVAIRTIGN. The helical transmembrane segment at 1016-1035 threads the bilayer; the sequence is IMIVTTLLQFMFACIGVQLF. The Extracellular portion of the chain corresponds to 1036 to 1125; sequence KGKFYRCTDE…AGPVYNHRVE (90 aa). The tract at residues 1073–1163 is dihydropyridine binding; it reads RIWQNSDFNF…QEQGEKEYKN (91 aa). Glu-1099 contacts Ca(2+). Residues 1126–1146 form a helical membrane-spanning segment; the sequence is ISIFFIIYIIIVAFFMMNIFV. Topologically, residues 1147–1203 are cytoplasmic; it reads GFVIVTFQEQGEKEYKNCELDKNQRQCVEYALKARPLRRYIPKNPYQYKFWYVVNSS. Residues 1190–1465 form an IV repeat; sequence NPYQYKFWYV…LFVAVIMDNF (276 aa). A helical membrane pass occupies residues 1204 to 1222; the sequence is PFEYMMFVLIMLNTLCLAM. The Extracellular segment spans residues 1223–1237; it reads QHYEQSKMFNDAMDI. Residues 1238–1257 traverse the membrane as a helical segment; it reads LNMVFTGVFTVEMVLKVIAF. Topologically, residues 1258-1264 are cytoplasmic; sequence KPKGYFS. Residues 1265 to 1286 form a helical membrane-spanning segment; it reads DAWNTFDSLIVIGSIIDVALSE. Topologically, residues 1287-1311 are extracellular; the sequence is ADPTESESLPLPTATPGNSEESNRI. The helical transmembrane segment at 1312 to 1331 threads the bilayer; it reads SITFFRLFRVMRLVKLLSRG. Over 1332–1350 the chain is Cytoplasmic; sequence EGIRTLLWTFIKSFQALPY. Residues 1351–1370 traverse the membrane as a helical segment; the sequence is VALLIAMLFFIYAVIGMQMF. Topologically, residues 1371–1437 are extracellular; it reads GKVAMRDNNQ…GEEYTCGSNF (67 aa). Residues 1418-1484 are dihydropyridine binding; sequence LCDPDSDYNP…LGPHHLDEFK (67 aa). A phenylalkylamine binding region spans residues 1430 to 1473; that stretch reads EYTCGSNFAIVYFISFYMLCAFLIINLFVAVIMDNFDYLTRDWS. Residues 1438–1462 form a helical membrane-spanning segment; that stretch reads AIVYFISFYMLCAFLIINLFVAVIM. Residues 1463-1610 lie on the Cytoplasmic side of the membrane; the sequence is DNFDYLTRDW…CFLSPSRSRS (148 aa).

It belongs to the calcium channel alpha-1 subunit (TC 1.A.1.11) family. CACNA1D subfamily. In terms of assembly, voltage-dependent calcium channels are multisubunit complexes, consisting of alpha-1, alpha-2, beta and delta subunits in a 1:1:1:1 ratio. The channel activity is directed by the pore-forming and voltage-sensitive alpha-1 subunit. In many cases, this subunit is sufficient to generate voltage-sensitive calcium channel activity. The auxiliary subunits beta and alpha-2/delta linked by a disulfide bridge regulate the channel activity. Interacts with RIMBP2. Interacts with CABP1 and CABP4, resulting in a near elimination of calcium-dependent inactivation of the channel. Expressed in brain, heart and skeletal muscle.

The protein localises to the membrane. It catalyses the reaction Ca(2+)(in) = Ca(2+)(out). Functionally, voltage-sensitive calcium channels (VSCC) mediate the entry of calcium ions into excitable cells and are also involved in a variety of calcium-dependent processes, including muscle contraction, hormone or neurotransmitter release, gene expression, cell motility, cell division and cell death. The isoform alpha-1D gives rise to L-type calcium currents. Long-lasting (L-type) calcium channels belong to the 'high-voltage activated' (HVA) group. They are blocked by dihydropyridines (DHP), phenylalkylamines, and by benzothiazepines. This chain is Voltage-dependent L-type calcium channel subunit alpha-1D (CACNA1D), found in Mesocricetus auratus (Golden hamster).